The chain runs to 66 residues: Large ribosomal subunit protein bL33c (66 aa).

Belongs to the bacterial ribosomal protein bL33 family.

It is found in the plastid. It localises to the chloroplast. This Aethionema grandiflorum (Persian stone-cress) protein is Large ribosomal subunit protein bL33c.